Here is a 234-residue protein sequence, read N- to C-terminus: Glucosamine-6-phosphate deaminase (234 aa).

The Proton acceptor; for enolization step role is filled by D62. N128 acts as the For ring-opening step in catalysis. Catalysis depends on H130, which acts as the Proton acceptor; for ring-opening step. E135 acts as the For ring-opening step in catalysis.

The protein belongs to the glucosamine/galactosamine-6-phosphate isomerase family. NagB subfamily.

It carries out the reaction alpha-D-glucosamine 6-phosphate + H2O = beta-D-fructose 6-phosphate + NH4(+). The protein operates within amino-sugar metabolism; N-acetylneuraminate degradation; D-fructose 6-phosphate from N-acetylneuraminate: step 5/5. Its function is as follows. Catalyzes the reversible isomerization-deamination of glucosamine 6-phosphate (GlcN6P) to form fructose 6-phosphate (Fru6P) and ammonium ion. This Streptococcus suis (strain 98HAH33) protein is Glucosamine-6-phosphate deaminase.